Here is a 292-residue protein sequence, read N- to C-terminus: Ribosomal protein L11 methyltransferase (292 aa).

Residues T136, G159, D181, and N228 each coordinate S-adenosyl-L-methionine.

It belongs to the methyltransferase superfamily. PrmA family.

Its subcellular location is the cytoplasm. The catalysed reaction is L-lysyl-[protein] + 3 S-adenosyl-L-methionine = N(6),N(6),N(6)-trimethyl-L-lysyl-[protein] + 3 S-adenosyl-L-homocysteine + 3 H(+). In terms of biological role, methylates ribosomal protein L11. This chain is Ribosomal protein L11 methyltransferase, found in Rhizobium etli (strain ATCC 51251 / DSM 11541 / JCM 21823 / NBRC 15573 / CFN 42).